The chain runs to 685 residues: MHGITDGTYRLVSEYDPKGDQPKAIMALTDGVLRGDRWQTLLGVTGSGKTFTVSNVIAQVDKPVLVMSHNKTLAAQLYGELRQFFPDNAVEYFVSYYDFYQPEAYLPALDKYIAKDLRINDEIERLRLKTTSSLLSGRRDVIVVSSVSCIYGLGSPDDWKAQIVELRSGMEKDRDLFLQELVSLHYIRDDVDPGPGKFRVRGDIIDLVPAHEELALRVEFFGSEIESLQTFNIQSGELLGKDTYAFIYPARQFIAEAETLKQAMVAIENELAGRLNELRRDDRLVEARRLEERTRYDLEMMKELGYCSGIENYSRHLAGRSEGERPYCLLDYFPEDFLVIVDESHVTLPQIRGMYGGDRSRKAILVEHGFRLPSALDNRPLRFEEFTEIVPQVICVSATPGDLELERCGGVVVEQLVRPTGLLDPPVEVRPVKGQIDDLLAEIRRHTAKGHKALVMTLTKRMSEDLDDYFKKVGIRSRYLHSEIKSLERIQILRELRAGDVEVLVGVNLLREGLDLPEVSLVAILDADKEGFLRNTRSLMQIAGRAARNVDGFVVFYADVLTRSIMEVLDETARRRTVQQLYNETHGITPRSIRKSLDQVLNTTSVADAEERYRRKRFGLGAKSGVQSAALLHSFTPEESYAMVAELRLEMNEAAIQMEYEKAAYLRDEIARLMHGLEAQSDSKE.

Residues 30 to 188 form the Helicase ATP-binding domain; sequence DGVLRGDRWQ…QELVSLHYIR (159 aa). Position 43–50 (43–50) interacts with ATP; sequence GVTGSGKT. The short motif at 96–119 is the Beta-hairpin element; it reads YYDFYQPEAYLPALDKYIAKDLRI. The Helicase C-terminal domain maps to 435-597; it reads QIDDLLAEIR…ITPRSIRKSL (163 aa). The UVR domain maps to 641–676; sequence YAMVAELRLEMNEAAIQMEYEKAAYLRDEIARLMHG.

It belongs to the UvrB family. In terms of assembly, forms a heterotetramer with UvrA during the search for lesions. Interacts with UvrC in an incision complex.

The protein resides in the cytoplasm. The UvrABC repair system catalyzes the recognition and processing of DNA lesions. A damage recognition complex composed of 2 UvrA and 2 UvrB subunits scans DNA for abnormalities. Upon binding of the UvrA(2)B(2) complex to a putative damaged site, the DNA wraps around one UvrB monomer. DNA wrap is dependent on ATP binding by UvrB and probably causes local melting of the DNA helix, facilitating insertion of UvrB beta-hairpin between the DNA strands. Then UvrB probes one DNA strand for the presence of a lesion. If a lesion is found the UvrA subunits dissociate and the UvrB-DNA preincision complex is formed. This complex is subsequently bound by UvrC and the second UvrB is released. If no lesion is found, the DNA wraps around the other UvrB subunit that will check the other stand for damage. The polypeptide is UvrABC system protein B (Chlorobium phaeobacteroides (strain DSM 266 / SMG 266 / 2430)).